The chain runs to 185 residues: Large ribosomal subunit protein uL5 (185 aa).

This sequence belongs to the universal ribosomal protein uL5 family. Part of the 50S ribosomal subunit; part of the 5S rRNA/L5/L18/L25 subcomplex. Contacts the 5S rRNA and the P site tRNA. Forms a bridge to the 30S subunit in the 70S ribosome.

In terms of biological role, this is one of the proteins that bind and probably mediate the attachment of the 5S RNA into the large ribosomal subunit, where it forms part of the central protuberance. In the 70S ribosome it contacts protein S13 of the 30S subunit (bridge B1b), connecting the 2 subunits; this bridge is implicated in subunit movement. Contacts the P site tRNA; the 5S rRNA and some of its associated proteins might help stabilize positioning of ribosome-bound tRNAs. This is Large ribosomal subunit protein uL5 from Rhizobium etli (strain ATCC 51251 / DSM 11541 / JCM 21823 / NBRC 15573 / CFN 42).